Here is an 89-residue protein sequence, read N- to C-terminus: Small ribosomal subunit protein uS15 (89 aa).

The segment covering Met1 to Ser13 has biased composition (basic and acidic residues). Positions Met1–Ser24 are disordered.

This sequence belongs to the universal ribosomal protein uS15 family. In terms of assembly, part of the 30S ribosomal subunit. Forms a bridge to the 50S subunit in the 70S ribosome, contacting the 23S rRNA.

One of the primary rRNA binding proteins, it binds directly to 16S rRNA where it helps nucleate assembly of the platform of the 30S subunit by binding and bridging several RNA helices of the 16S rRNA. Its function is as follows. Forms an intersubunit bridge (bridge B4) with the 23S rRNA of the 50S subunit in the ribosome. The protein is Small ribosomal subunit protein uS15 of Christiangramia forsetii (strain DSM 17595 / CGMCC 1.15422 / KT0803) (Gramella forsetii).